We begin with the raw amino-acid sequence, 102 residues long: Protein AC4 (102 aa).

This sequence belongs to the geminiviridae protein AC4/C4 family.

Pathogenicity determinant. May act as a suppressor of RNA-mediated gene silencing, also known as post-transcriptional gene silencing (PTGS), a mechanism of plant viral defense that limits the accumulation of viral RNAs. The protein is Protein AC4 of Indian cassava mosaic virus (ICMV).